The primary structure comprises 168 residues: 3-hydroxyacyl-[acyl-carrier-protein] dehydratase FabZ (168 aa).

His54 is an active-site residue.

This sequence belongs to the thioester dehydratase family. FabZ subfamily.

It is found in the cytoplasm. The catalysed reaction is a (3R)-hydroxyacyl-[ACP] = a (2E)-enoyl-[ACP] + H2O. Its function is as follows. Involved in unsaturated fatty acids biosynthesis. Catalyzes the dehydration of short chain beta-hydroxyacyl-ACPs and long chain saturated and unsaturated beta-hydroxyacyl-ACPs. This Yersinia enterocolitica serotype O:8 / biotype 1B (strain NCTC 13174 / 8081) protein is 3-hydroxyacyl-[acyl-carrier-protein] dehydratase FabZ.